We begin with the raw amino-acid sequence, 208 residues long: Redox-sensing transcriptional repressor Rex 1 (208 aa).

Positions 15 to 54 (SYYMCLERLLDEGVEVVSSEELARRLDLKASQIRKDLSYF) form a DNA-binding region, H-T-H motif. An NAD(+)-binding site is contributed by 89-94 (GAGNIG).

This sequence belongs to the transcriptional regulatory Rex family. Homodimer.

It is found in the cytoplasm. Its function is as follows. Modulates transcription in response to changes in cellular NADH/NAD(+) redox state. In Thermotoga maritima (strain ATCC 43589 / DSM 3109 / JCM 10099 / NBRC 100826 / MSB8), this protein is Redox-sensing transcriptional repressor Rex 1.